The chain runs to 419 residues: L-rhamnose isomerase (419 aa).

Mn(2+) is bound by residues His262, Asp294, and Asp296.

Belongs to the rhamnose isomerase family. Homotetramer. It depends on Mn(2+) as a cofactor.

The protein resides in the cytoplasm. It carries out the reaction L-rhamnopyranose = L-rhamnulose. It functions in the pathway carbohydrate degradation; L-rhamnose degradation; glycerone phosphate from L-rhamnose: step 1/3. Catalyzes the interconversion of L-rhamnose and L-rhamnulose. This is L-rhamnose isomerase from Escherichia coli O81 (strain ED1a).